The primary structure comprises 746 residues: Alpha-1,4-glucan:maltose-1-phosphate maltosyltransferase (746 aa).

Residues 1-43 (MAAVQHRATTRTSNTDNSTTKTKSKATSARKSPATKRKRVSAE) are disordered. Positions 10–32 (TRTSNTDNSTTKTKSKATSARKS) are enriched in low complexity. Positions 343, 403, and 438 each coordinate alpha-maltose 1-phosphate. The Nucleophile role is filled by aspartate 473. Asparagine 474 is an alpha-maltose 1-phosphate binding site. The active-site Proton donor is glutamate 502. 612–613 (KY) serves as a coordination point for alpha-maltose 1-phosphate.

Belongs to the glycosyl hydrolase 13 family. GlgE subfamily. In terms of assembly, homodimer.

It carries out the reaction alpha-maltose 1-phosphate + [(1-&gt;4)-alpha-D-glucosyl](n) = [(1-&gt;4)-alpha-D-glucosyl](n+2) + phosphate. Functionally, maltosyltransferase that uses maltose 1-phosphate (M1P) as the sugar donor to elongate linear or branched alpha-(1-&gt;4)-glucans. Is involved in a branched alpha-glucan biosynthetic pathway from trehalose, together with TreS, Mak and GlgB. The chain is Alpha-1,4-glucan:maltose-1-phosphate maltosyltransferase from Bifidobacterium longum (strain NCC 2705).